A 626-amino-acid polypeptide reads, in one-letter code: DNA mismatch repair protein MutL (626 aa).

Disordered regions lie at residues serine 385–valine 413 and leucine 418–aspartate 437.

Belongs to the DNA mismatch repair MutL/HexB family.

Its function is as follows. This protein is involved in the repair of mismatches in DNA. It is required for dam-dependent methyl-directed DNA mismatch repair. May act as a 'molecular matchmaker', a protein that promotes the formation of a stable complex between two or more DNA-binding proteins in an ATP-dependent manner without itself being part of a final effector complex. This Chlorobaculum parvum (strain DSM 263 / NCIMB 8327) (Chlorobium vibrioforme subsp. thiosulfatophilum) protein is DNA mismatch repair protein MutL.